A 311-amino-acid chain; its full sequence is Probable manganese-dependent inorganic pyrophosphatase (311 aa).

Mn(2+)-binding residues include His9, Asp13, Asp15, Asp77, His99, and Asp151.

This sequence belongs to the PPase class C family. Requires Mn(2+) as cofactor.

The protein resides in the cytoplasm. It catalyses the reaction diphosphate + H2O = 2 phosphate + H(+). This is Probable manganese-dependent inorganic pyrophosphatase from Streptococcus sanguinis (strain SK36).